A 155-amino-acid chain; its full sequence is Large ribosomal subunit protein bL17 (155 aa).

It belongs to the bacterial ribosomal protein bL17 family. In terms of assembly, part of the 50S ribosomal subunit. Contacts protein L32.

This is Large ribosomal subunit protein bL17 from Syntrophotalea carbinolica (strain DSM 2380 / NBRC 103641 / GraBd1) (Pelobacter carbinolicus).